A 547-amino-acid chain; its full sequence is Chaperonin GroEL (547 aa).

ATP contacts are provided by residues 30 to 33 (TLGP), K51, 87 to 91 (DGTTT), G415, 479 to 481 (DAA), and D495.

Belongs to the chaperonin (HSP60) family. In terms of assembly, forms a cylinder of 14 subunits composed of two heptameric rings stacked back-to-back. Interacts with the co-chaperonin GroES.

The protein localises to the cytoplasm. The enzyme catalyses ATP + H2O + a folded polypeptide = ADP + phosphate + an unfolded polypeptide.. In terms of biological role, together with its co-chaperonin GroES, plays an essential role in assisting protein folding. The GroEL-GroES system forms a nano-cage that allows encapsulation of the non-native substrate proteins and provides a physical environment optimized to promote and accelerate protein folding. This chain is Chaperonin GroEL, found in Dichelobacter nodosus (strain VCS1703A).